The sequence spans 204 residues: Oxidoreductase iacF (204 aa).

It belongs to the oxidoreductase OpS7 family.

Its pathway is secondary metabolite biosynthesis. In terms of biological role, oxidoreductase; part of the gene cluster that mediates the biosynthesis of iso-A82775C, a enylepoxycyclohexane and biosynthetic precursor of the chloropestolide anticancer natural products. Within the cluster, the prenyltransferase iacE prenylates siccayne to generate pestalodiol E, using dimethylallyl diphosphate (DMAPP) as cosubstrate. The probable oxidoreductase iacF is then involved in the epoxidation of pestalodiol F to pestalodiol F, which is further converted to pestalofone A by the short-chain dehydrogenase/reductase iacG. Iso-A82775C is subsequently generated from pestalofone A by the short-chain dehydrogenase/reductase iacC. Iso-A82775C is further condensed with maldoxin via a Diels-Alder reaction to produce the anticancer natural products chloropestolides A to E. This is Oxidoreductase iacF from Pestalotiopsis fici (strain W106-1 / CGMCC3.15140).